Consider the following 203-residue polypeptide: uncharacterized protein (203 aa).

Disordered stretches follow at residues 65–84 (LSLS…SFDS) and 92–170 (SSSS…ETAL). Composition is skewed to acidic residues over residues 68 to 82 (SEDE…EDSF) and 98 to 110 (SEEE…EESL). A compositionally biased stretch (low complexity) spans 111–122 (DSSFLVSASLSL). Over residues 123–168 (SEDDEEEDSESEDEDEDEDSDSDSDSDSDSDEDEDEDEDSEEEEET) the composition is skewed to acidic residues. The helical transmembrane segment at 182–202 (TSFLLPFTLVVLAILFYPAWV) threads the bilayer.

The protein localises to the membrane. This is an uncharacterized protein from Saccharomyces cerevisiae (strain ATCC 204508 / S288c) (Baker's yeast).